The chain runs to 508 residues: Strychnine-11-hydroxylase (508 aa).

A helical membrane pass occupies residues 5 to 25 (MSFLLLFSLCFLIHCFVFLLI). Cys-445 is a binding site for heme.

It belongs to the cytochrome P450 family. It depends on heme as a cofactor.

Its subcellular location is the membrane. The enzyme catalyses beta-colubrine + reduced [NADPH--hemoprotein reductase] + O2 = 11-demethylbrucine + oxidized [NADPH--hemoprotein reductase] + H2O + H(+). It participates in alkaloid biosynthesis. In terms of biological role, monooxygenase involved in the biosynthesis of curare monoterpene indole alkaloids (MIAs), natural products such as strychnine, a neurotoxic compound used as a pesticide to control rodents, and its pharmacologically active derivatives, including brucine, used to regulate blood pressure. Curare alkaloids act as animal glycine receptor antagonists. Catalyzes the conversion of beta-colubrine to 11-deMe brucine. The protein is Strychnine-11-hydroxylase of Strychnos nux-vomica (Poison nut).